The sequence spans 289 residues: Glucosamine-6-phosphate deaminase 1 (289 aa).

An N6-acetyllysine modification is found at lysine 64. Aspartate 72 acts as the Proton acceptor; for enolization step in catalysis. The active-site For ring-opening step is aspartate 141. The Proton acceptor; for ring-opening step role is filled by histidine 143. The active-site For ring-opening step is the glutamate 148. The residue at position 161 (threonine 161) is a Phosphothreonine.

It belongs to the glucosamine/galactosamine-6-phosphate isomerase family. As to quaternary structure, homohexamer.

Its subcellular location is the cytoplasm. It carries out the reaction alpha-D-glucosamine 6-phosphate + H2O = beta-D-fructose 6-phosphate + NH4(+). Its pathway is nucleotide-sugar biosynthesis; UDP-N-acetyl-alpha-D-glucosamine biosynthesis; alpha-D-glucosamine 6-phosphate from D-fructose 6-phosphate: step 1/1. With respect to regulation, allosterically activated by N-acetylglucosamine-6-phosphate (GlcNAc6P). Functionally, catalyzes the reversible conversion of alpha-D-glucosamine 6-phosphate (GlcN-6P) into beta-D-fructose 6-phosphate (Fru-6P) and ammonium ion, a regulatory reaction step in de novo uridine diphosphate-N-acetyl-alpha-D-glucosamine (UDP-GlcNAc) biosynthesis via hexosamine pathway. Deamination is coupled to aldo-keto isomerization mediating the metabolic flux from UDP-GlcNAc toward Fru-6P. At high ammonium level can drive amination and isomerization of Fru-6P toward hexosamines and UDP-GlcNAc synthesis. Has a role in fine tuning the metabolic fluctuations of cytosolic UDP-GlcNAc and their effects on hyaluronan synthesis that occur during tissue remodeling. Seems to trigger calcium oscillations in mammalian eggs. These oscillations serve as the essential trigger for egg activation and early development of the embryo. In Pongo abelii (Sumatran orangutan), this protein is Glucosamine-6-phosphate deaminase 1.